The primary structure comprises 506 residues: Maturase K (506 aa).

Belongs to the intron maturase 2 family. MatK subfamily.

The protein localises to the plastid. It is found in the chloroplast. Usually encoded in the trnK tRNA gene intron. Probably assists in splicing its own and other chloroplast group II introns. This is Maturase K from Atractylodes lancea (Atractylodes japonica).